Reading from the N-terminus, the 535-residue chain is Succinate-semialdehyde dehydrogenase, mitochondrial (535 aa).

A mitochondrion-targeting transit peptide spans 1–47 (MATCIWLRSCGARRLGSTFPGCRLRPRAGGLVPASGPAPGPAQLRCY). Lys126 bears the N6-acetyllysine; alternate mark. Residue Lys126 is modified to N6-succinyllysine; alternate. N6-succinyllysine occurs at positions 135 and 184. 202–204 (TPW) lines the NAD(+) pocket. Arg213 contributes to the substrate binding site. 228–231 (KPAE) contributes to the NAD(+) binding site. At Lys265 the chain carries N6-acetyllysine; alternate. At Lys265 the chain carries N6-succinyllysine; alternate. Residues 284–289 (GSTTTG) and Glu306 each bind NAD(+). Glu306 serves as the catalytic Proton acceptor. Arg334 is a binding site for substrate. The active-site Nucleophile is Cys340. Cys340 and Cys342 form a disulfide bridge. An N6-acetyllysine modification is found at Lys365. Lys402 carries the post-translational modification N6-succinyllysine. Position 411 is an N6-acetyllysine (Lys411). 438–440 (ETF) contributes to the NAD(+) binding site. Ser498 is a binding site for substrate. Ser499 is modified (phosphoserine).

This sequence belongs to the aldehyde dehydrogenase family. As to quaternary structure, homotetramer. In terms of tissue distribution, brain, pancreas, heart, liver, skeletal muscle and kidney. Lower in placenta.

It is found in the mitochondrion. It carries out the reaction succinate semialdehyde + NAD(+) + H2O = succinate + NADH + 2 H(+). It participates in amino-acid degradation; 4-aminobutanoate degradation. Its activity is regulated as follows. Redox-regulated. Inhibited under oxydizing conditions. Inhibited by hydrogen peroxide H(2)O(2). Its function is as follows. Catalyzes one step in the degradation of the inhibitory neurotransmitter gamma-aminobutyric acid (GABA). The chain is Succinate-semialdehyde dehydrogenase, mitochondrial from Homo sapiens (Human).